A 325-amino-acid polypeptide reads, in one-letter code: Tartrate-resistant acid phosphatase type 5 (325 aa).

The N-terminal stretch at 1 to 21 is a signal peptide; the sequence is MDMWTALLILQALLLPSLADG. Fe cation contacts are provided by Asp33, Asp71, Tyr74, and Asn110. N-linked (GlcNAc...) asparagine glycosylation is found at Asn116 and Asn147. Residues Cys161 and Cys219 are joined by a disulfide bond. His205, His240, and His242 together coordinate Fe cation.

This sequence belongs to the metallophosphoesterase superfamily. Purple acid phosphatase family. As to quaternary structure, exists either as monomer or, after proteolytic processing, as a dimer of two chains linked by disulfide bond(s). Requires Fe cation as cofactor.

Its subcellular location is the lysosome. It carries out the reaction a phosphate monoester + H2O = an alcohol + phosphate. Functionally, involved in osteopontin/bone sialoprotein dephosphorylation. Its expression seems to increase in certain pathological states such as Gaucher and Hodgkin diseases, the hairy cell, the B-cell, and the T-cell leukemias. The polypeptide is Tartrate-resistant acid phosphatase type 5 (ACP5) (Homo sapiens (Human)).